The sequence spans 212 residues: uncharacterized protein (212 aa).

An N-terminal signal peptide occupies residues 1 to 21 (MRRLTAFGLALLLLASGVARG).

This sequence to E.coli YfaT and T.maritima TM0986.

This is an uncharacterized protein from Pseudomonas aeruginosa (strain ATCC 15692 / DSM 22644 / CIP 104116 / JCM 14847 / LMG 12228 / 1C / PRS 101 / PAO1).